The sequence spans 126 residues: Large ribosomal subunit protein bL20c (126 aa).

It belongs to the bacterial ribosomal protein bL20 family.

The protein localises to the plastid. The protein resides in the chloroplast. Its function is as follows. Binds directly to 23S ribosomal RNA and is necessary for the in vitro assembly process of the 50S ribosomal subunit. It is not involved in the protein synthesizing functions of that subunit. The sequence is that of Large ribosomal subunit protein bL20c from Lactuca sativa (Garden lettuce).